We begin with the raw amino-acid sequence, 310 residues long: Ninja-family protein 3 (310 aa).

3 disordered regions span residues 1 to 29 (MASR…GEPD), 68 to 140 (SLPG…DDAQ), and 156 to 215 (DQGN…EQPP). A compositionally biased stretch (basic and acidic residues) spans 99 to 108 (ERWRRREMQS). 2 stretches are compositionally biased toward polar residues: residues 156-166 (DQGNASSSMPE) and 176-193 (KSTS…QNKS).

Belongs to the Ninja family.

Its subcellular location is the nucleus. The protein is Ninja-family protein 3 (AFP-D1) of Triticum aestivum (Wheat).